Here is a 217-residue protein sequence, read N- to C-terminus: ATP phosphoribosyltransferase (217 aa).

This sequence belongs to the ATP phosphoribosyltransferase family. Short subfamily. Heteromultimer composed of HisG and HisZ subunits.

The protein localises to the cytoplasm. It catalyses the reaction 1-(5-phospho-beta-D-ribosyl)-ATP + diphosphate = 5-phospho-alpha-D-ribose 1-diphosphate + ATP. It functions in the pathway amino-acid biosynthesis; L-histidine biosynthesis; L-histidine from 5-phospho-alpha-D-ribose 1-diphosphate: step 1/9. Its function is as follows. Catalyzes the condensation of ATP and 5-phosphoribose 1-diphosphate to form N'-(5'-phosphoribosyl)-ATP (PR-ATP). Has a crucial role in the pathway because the rate of histidine biosynthesis seems to be controlled primarily by regulation of HisG enzymatic activity. The polypeptide is ATP phosphoribosyltransferase (hisG) (Neisseria meningitidis serogroup A / serotype 4A (strain DSM 15465 / Z2491)).